Consider the following 102-residue polypeptide: U7-agatoxin-Ao1a (102 aa).

A signal peptide spans 1–19 (MTQAFFFLLLVSLVASTLS). Residues 20–39 (KEFNFCPRAIDEVCPVKEKR) constitute a propeptide that is removed on maturation. Trp-101 is modified (tryptophan amide).

The protein belongs to the venom protein 11 family. 02 (wap-2) subfamily. Contains 5 disulfide bonds. Expressed by the venom gland.

It localises to the secreted. The sequence is that of U7-agatoxin-Ao1a from Agelena orientalis (Funnel-web spider).